We begin with the raw amino-acid sequence, 785 residues long: Cadherin-7 (785 aa).

An N-terminal signal peptide occupies residues 1–27 (MKLGKVELCRFLQLIALFLCFSGMNQA). Residues 28–47 (ELPRSRSKPYFQLGRSRTKR) constitute a propeptide that is removed on maturation. The Extracellular segment spans residues 28–607 (ELPRSRSKPY…AYILPAGLST (580 aa)). Cadherin domains are found at residues 49-153 (WVWN…EPKF), 154-262 (LDGP…PPRF), 263-377 (PRRS…PPVF), 378-482 (SSPL…APEF), and 482-599 (FAMD…AEAY). 2 N-linked (GlcNAc...) asparagine glycosylation sites follow: N449 and N530. A helical transmembrane segment spans residues 608–628 (GALIAILACVLTLLVLILLIV). Over 629-785 (TMKRRKKEPL…YGNGQESLYS (157 aa)) the chain is Cytoplasmic.

It localises to the cell membrane. In terms of biological role, cadherins are calcium-dependent cell adhesion proteins. They preferentially interact with themselves in a homophilic manner in connecting cells; cadherins may thus contribute to the sorting of heterogeneous cell types. The sequence is that of Cadherin-7 (Cdh7) from Rattus norvegicus (Rat).